A 160-amino-acid polypeptide reads, in one-letter code: uncharacterized protein (160 aa).

The helical transmembrane segment at 8-28 threads the bilayer; the sequence is LLFILVFISGFILFTVYSYTA.

The protein resides in the membrane. This is an uncharacterized protein from Escherichia coli (strain K12).